A 289-amino-acid polypeptide reads, in one-letter code: uncharacterized protein (289 aa).

A run of 10 helical transmembrane segments spans residues 7–27, 33–53, 65–85, 92–112, 123–143, 148–168, 182–202, 212–232, 241–261, and 265–285; these read LLLA…KIGL, FNLA…WVFW, WLHL…FQFL, ATNA…WGLV, GVFL…LEFF, IFGD…TVLG, AYAF…SGFA, VAAL…VWYY, SVAV…FYAL, and PDFF…LTTA. EamA domains lie at 14 to 136 and 159 to 285; these read LIWA…LIVS and FLWA…LTTA.

The protein belongs to the EamA transporter family.

The protein localises to the cell membrane. This is an uncharacterized protein from Archaeoglobus fulgidus (strain ATCC 49558 / DSM 4304 / JCM 9628 / NBRC 100126 / VC-16).